We begin with the raw amino-acid sequence, 93 residues long: Cell division protein FtsB (93 aa).

Topologically, residues 1 to 3 (MRV) are cytoplasmic. The helical transmembrane segment at 4-21 (TLVVLLALFLALQYRLWF) threads the bilayer. The Periplasmic portion of the chain corresponds to 22–93 (GKNSLPDYWR…FFRLVPDRNP (72 aa)). Residues 28 to 75 (DYWRLQQEVSNQKNTNENLERRNQLIYADIEDLREGEDALEERARNEL) are a coiled coil.

This sequence belongs to the FtsB family. As to quaternary structure, part of a complex composed of FtsB, FtsL and FtsQ.

It localises to the cell inner membrane. Functionally, essential cell division protein. May link together the upstream cell division proteins, which are predominantly cytoplasmic, with the downstream cell division proteins, which are predominantly periplasmic. The polypeptide is Cell division protein FtsB (Idiomarina loihiensis (strain ATCC BAA-735 / DSM 15497 / L2-TR)).